The following is a 93-amino-acid chain: Integration host factor subunit beta (93 aa).

Belongs to the bacterial histone-like protein family. In terms of assembly, heterodimer of an alpha and a beta chain.

Functionally, this protein is one of the two subunits of integration host factor, a specific DNA-binding protein that functions in genetic recombination as well as in transcriptional and translational control. In Aliivibrio fischeri (strain ATCC 700601 / ES114) (Vibrio fischeri), this protein is Integration host factor subunit beta.